The sequence spans 208 residues: LexA repressor (208 aa).

A DNA-binding region (H-T-H motif) is located at residues 29 to 49; that stretch reads IREIGDSLNINSTSTVHNNIL. Active-site for autocatalytic cleavage activity residues include Ser131 and Lys168.

Belongs to the peptidase S24 family. Homodimer.

The enzyme catalyses Hydrolysis of Ala-|-Gly bond in repressor LexA.. Represses a number of genes involved in the response to DNA damage (SOS response), including recA and lexA. In the presence of single-stranded DNA, RecA interacts with LexA causing an autocatalytic cleavage which disrupts the DNA-binding part of LexA, leading to derepression of the SOS regulon and eventually DNA repair. The polypeptide is LexA repressor (Finegoldia magna (strain ATCC 29328 / DSM 20472 / WAL 2508) (Peptostreptococcus magnus)).